We begin with the raw amino-acid sequence, 77 residues long: Translation initiation factor IF-1, chloroplastic (77 aa).

Residues 1-71 enclose the S1-like domain; the sequence is MKEQKWVHEG…TRGRIIYRLR (71 aa).

The protein belongs to the IF-1 family. As to quaternary structure, component of the 30S ribosomal translation pre-initiation complex which assembles on the 30S ribosome in the order IF-2 and IF-3, IF-1 and N-formylmethionyl-tRNA(fMet); mRNA recruitment can occur at any time during PIC assembly.

The protein resides in the plastid. Its subcellular location is the chloroplast. One of the essential components for the initiation of protein synthesis. Stabilizes the binding of IF-2 and IF-3 on the 30S subunit to which N-formylmethionyl-tRNA(fMet) subsequently binds. Helps modulate mRNA selection, yielding the 30S pre-initiation complex (PIC). Upon addition of the 50S ribosomal subunit IF-1, IF-2 and IF-3 are released leaving the mature 70S translation initiation complex. The protein is Translation initiation factor IF-1, chloroplastic of Cercidiphyllum japonicum (Katsura tree).